Here is a 212-residue protein sequence, read N- to C-terminus: Orotate phosphoribosyltransferase (212 aa).

Position 26 (Lys-26) interacts with 5-phospho-alpha-D-ribose 1-diphosphate. Phe-34–Phe-35 serves as a coordination point for orotate. 5-phospho-alpha-D-ribose 1-diphosphate-binding positions include Tyr-72 to Lys-73, Arg-98, Lys-99, Lys-102, His-104, and Asp-123 to Ala-131. Orotate is bound by residues Thr-127 and Arg-155.

It belongs to the purine/pyrimidine phosphoribosyltransferase family. PyrE subfamily. In terms of assembly, homodimer. It depends on Mg(2+) as a cofactor.

It catalyses the reaction orotidine 5'-phosphate + diphosphate = orotate + 5-phospho-alpha-D-ribose 1-diphosphate. It participates in pyrimidine metabolism; UMP biosynthesis via de novo pathway; UMP from orotate: step 1/2. Functionally, catalyzes the transfer of a ribosyl phosphate group from 5-phosphoribose 1-diphosphate to orotate, leading to the formation of orotidine monophosphate (OMP). The chain is Orotate phosphoribosyltransferase from Marinobacter nauticus (strain ATCC 700491 / DSM 11845 / VT8) (Marinobacter aquaeolei).